A 121-amino-acid polypeptide reads, in one-letter code: Small ribosomal subunit protein uS13 (121 aa).

The interval 93 to 121 (RKGLPVRGQKTKTNARTRKGKRKTVGAKS) is disordered.

This sequence belongs to the universal ribosomal protein uS13 family. As to quaternary structure, part of the 30S ribosomal subunit. Forms a loose heterodimer with protein S19. Forms two bridges to the 50S subunit in the 70S ribosome.

Located at the top of the head of the 30S subunit, it contacts several helices of the 16S rRNA. In the 70S ribosome it contacts the 23S rRNA (bridge B1a) and protein L5 of the 50S subunit (bridge B1b), connecting the 2 subunits; these bridges are implicated in subunit movement. Contacts the tRNAs in the A and P-sites. The polypeptide is Small ribosomal subunit protein uS13 (Campylobacter lari (strain RM2100 / D67 / ATCC BAA-1060)).